Here is a 1207-residue protein sequence, read N- to C-terminus: Brassinosteroid LRR receptor kinase (1207 aa).

Positions 1–34 are cleaved as a signal peptide; the sequence is MKAHKTVFNQHPLSLNKLFFVLLLIFFLPPASPA. A Cys pair 1 motif is present at residues 71–78; it reads CSFTGVSC. 20 LRR repeats span residues 109–131, 135–157, 161–181, 186–207, 213–234, 235–257, 258–280, 282–304, 305–325, 329–350, 353–374, 378–400, 402–423, 428–450, 452–474, 476–499, 500–523, 524–547, 548–570, and 572–594; these read NLES…AKSQ, TLDS…SSFG, NLKS…EMLK, SLQV…PWVS, ELEF…LDFK, NLSY…KDCS, NLQH…LSSC, KLSF…PSES, LQYL…QLAD, TVVE…SLGE, SLEL…DTLS, NIKT…FSNL, KLET…GICK, NLKV…LSNC, QLVS…LGSL, KLKD…MYLQ, ALEN…SNCT, KLNW…GRLS, NLAI…LGNC, and SLIW…LFKQ. A glycan (N-linked (GlcNAc...) asparagine) is linked at asparagine 119. Asparagine 166 and asparagine 196 each carry an N-linked (GlcNAc...) asparagine glycan. N-linked (GlcNAc...) asparagine glycosylation is found at asparagine 235 and asparagine 245. Asparagine 287 carries an N-linked (GlcNAc...) asparagine glycan. N-linked (GlcNAc...) asparagine glycans are attached at residues asparagine 339 and asparagine 363. Residues asparagine 412 and asparagine 449 are each glycosylated (N-linked (GlcNAc...) asparagine). Asparagine 521 is a glycosylation site (N-linked (GlcNAc...) asparagine). 4 N-linked (GlcNAc...) asparagine glycosylation sites follow: asparagine 556, asparagine 584, asparagine 646, and asparagine 662. LRR repeat units follow at residues 664–686, 688–711, 712–735, and 736–758; these read SMIF…LGAM, YLSI…GGLK, NVAI…TSLT, and LLGE…APFD. N-linked (GlcNAc...) asparagine glycans are attached at residues asparagine 724, asparagine 746, and asparagine 767. Residues 771 to 779 carry the Cys pair 2 motif; sequence CGYPLPIPC. Residues 803-823 form a helical membrane-spanning segment; it reads SVAMGLLFSLFCIFGLIIVAI. A Protein kinase domain is found at 888–1163; sequence FHNDSLVGSG…IQVMAMFKEI (276 aa). ATP is bound by residues 894-902 and lysine 916; that span reads VGSGGFGDV. The active-site Proton acceptor is aspartate 1014.

This sequence belongs to the protein kinase superfamily. Ser/Thr protein kinase family.

The protein localises to the cell membrane. It catalyses the reaction L-seryl-[protein] + ATP = O-phospho-L-seryl-[protein] + ADP + H(+). It carries out the reaction L-threonyl-[protein] + ATP = O-phospho-L-threonyl-[protein] + ADP + H(+). Its function is as follows. Receptor with a serine/threonine-protein kinase activity. Regulates, in response to brassinosteroid binding, a signaling cascade involved in plant development, including expression of light- and stress-regulated genes, promotion of cell elongation, normal leaf and chloroplast senescence, and flowering. May be involved in a feedback regulation of brassinosteroid biosynthesis. May be also involved in the perception of systemin, a peptide hormone responsible for the systemic activation of defense genes in leaves of wounded plants. In Solanum lycopersicum (Tomato), this protein is Brassinosteroid LRR receptor kinase (CURL3).